Reading from the N-terminus, the 132-residue chain is Large ribosomal subunit protein bL17 (132 aa).

Belongs to the bacterial ribosomal protein bL17 family. As to quaternary structure, part of the 50S ribosomal subunit. Contacts protein L32.

The polypeptide is Large ribosomal subunit protein bL17 (Saccharophagus degradans (strain 2-40 / ATCC 43961 / DSM 17024)).